Consider the following 533-residue polypeptide: MEKHHRLPLPELHDDKHRHKQCNGENSNRFRPPKYKTRGYVAVDNNNLNRSQSLGSCSTNSSQIAHAISFRDAGCSDSSTLPSSPVQAELSTLSLSHFEQCFERLAKLGEGSFGEVFQVRDRSDGQLYAVKISKQLFRGEQYRAERLEEVRRYEEFSGHENCIRFIRAWEQYDRLYMQMELCRESLEQYLLRCQRIPEERIWHILLDLLRGLKSLHDRNLIHLDIKLDNVLIGEDDETCKLADFGLVIDVDRANSHHATEGDSRYMAPEILQGHFSKAADIFSLGIAMLELACYMDLPSNGPLWHELRHGILPEEFINKISLELQSVIKSMMKPDPAQRPTAEQLLSHPKLQYLQKKRKSLMNFSMLSRSFRRSRRAVWGRMCNWKTAAFRYLLYFLEVLHLCKPITASQPNINIVPSSPSSKGVPLVPQVEFQLVGSTPIANRDCYASDFLSGEDPLDLSNQGSPNVINSTPLNTNQGKSRLDLLKNNVDSMGRYVHVHDFESPCSALSSAKVLDTSSFRRKKLFVLEYDDE.

Residues Met-1–Tyr-35 are disordered. Positions Phe-102–Leu-351 constitute a Protein kinase domain. ATP-binding positions include Leu-108 to Val-116 and Lys-131. Asp-224 (proton acceptor) is an active-site residue. The Mg(2+) site is built by Asn-229 and Asp-243. A phosphoserine mark is found at Ser-504 and Ser-519.

This sequence belongs to the protein kinase superfamily. Ser/Thr protein kinase family. WEE1 subfamily.

The protein resides in the golgi apparatus membrane. It carries out the reaction L-seryl-[protein] + ATP = O-phospho-L-seryl-[protein] + ADP + H(+). The enzyme catalyses L-threonyl-[protein] + ATP = O-phospho-L-threonyl-[protein] + ADP + H(+). Acts as a negative regulator of entry into mitosis (G2 to M transition) by phosphorylation of Cdk1 specifically when Cdk1 is complexed to cyclins. Mediates phosphorylation of Cdk1 predominantly on 'Thr-14'. Also involved in Golgi fragmentation. May be involved in phosphorylation of Cdk1 on 'Tyr-15' to a lesser degree, however tyrosine kinase activity is unclear and may be indirect. May be a downstream target of Notch signaling pathway during eye development. The chain is Membrane-associated tyrosine- and threonine-specific cdc2-inhibitory kinase (Myt1) from Drosophila melanogaster (Fruit fly).